The following is a 261-amino-acid chain: Neurovirulence factor ICP34.5 (261 aa).

The segment covering 1–17 has biased composition (basic residues); the sequence is MSRRRGPRRRGPRRRPR. Positions 1-19 are required for nucleolar localization; it reads MSRRRGPRRRGPRRRPRPG. Disordered regions lie at residues 1–59, 75–135, and 145–164; these read MSRR…SAPA, DSDD…LALR, and RLSLRRRRPPASPPADAPRG. Repeats lie at residues 3–7, 8–12, 16–23, and 24–31; these read RRRGP and PRPGAPAV. The segment at 3–12 is 2 X 5 AA tandem repeats of R-R-R-G-P; that stretch reads RRRGPRRRGP. The segment at 16–31 is 2 X 8 AA tandem repeats of P-R-P-G-A-P-A-V; the sequence is PRPGAPAVPRPGAPAV. Positions 18–32 are enriched in pro residues; the sequence is PGAPAVPRPGAPAVP. Residues 75-88 are compositionally biased toward acidic residues; that stretch reads DSDDADYAGNDDAE. Residues 101–111 are compositionally biased toward low complexity; the sequence is APEAPHAAPAA. A Nuclear export signal motif is present at residues 128-137; the sequence is LPPHLALRLR. Positions 163-176 are binding to PP1CA; the sequence is RGKVCFSPRVQVRH. The segment at 163–176 is interaction with host PPP1CA; that stretch reads RGKVCFSPRVQVRH. The tract at residues 178–261 is important for interferon resistance; the sequence is VAWETAARLA…AAAGPGRRAV (84 aa). The short motif at 188-206 is the Bipartite nuclear localization signal element; that stretch reads RRGSWARERADRDRFRRRV. Residues 206-221 form an interaction with host EIF2S1/EIF-2ALPHA region; sequence VAAAEAVIGPCLEPEA. The segment at 223 to 261 is disordered; that stretch reads ARARARARAHEDGGPAEEEEAAAAARGSSAAAGPGRRAV. The span at 244 to 261 shows a compositional bias: low complexity; sequence AAAARGSSAAAGPGRRAV.

It belongs to the PPP1R15 family. Interacts with host PPP1CA to form a high-molecular-weight complex that dephosphorylates EIF2S1/eIF-2alpha. Interacts with host EIF2S1/eIF-2alpha; this interaction is crucial for the specific dephosphorylation of EIF2S1/eIF-2alpha by PPP1CA.

The protein resides in the host cytoplasm. The protein localises to the host nucleus. It is found in the host nucleolus. Its subcellular location is the virion. In terms of biological role, plays essential roles in viral nuclear egress to mediate capsid transit across the nuclear membrane and also in the inhibition of host immune response and integrated stress response (ISR). Facilitates nuclear egress cooperatively with host C1QBP and protein kinase C/PKC to induce lamin A/C phosphorylation and subsequent reorganization. In turn, lamina disassembles and nuclear egress occurs. Recruits the serine/threonine-protein phosphatase PPP1CA/PP1-alpha to dephosphorylate the translation initiation factor EIF2S1/eIF-2alpha, thereby couteracting the host shutoff of protein synthesis involving double-stranded RNA-dependent protein kinase EIF2AK2/PKR. Also down-modulates the host MHC class II proteins cell surface expression. Acts as a neurovirulence factor that has a profound effect on the growth of the virus in central nervous system tissue, probably through its ability to maintain an environment favorable for viral replication. The chain is Neurovirulence factor ICP34.5 (RL1) from Human herpesvirus 2 (strain HG52) (HHV-2).